We begin with the raw amino-acid sequence, 87 residues long: Large ribosomal subunit protein bL31B (87 aa).

It belongs to the bacterial ribosomal protein bL31 family. Type B subfamily. In terms of assembly, part of the 50S ribosomal subunit.

The sequence is that of Large ribosomal subunit protein bL31B from Staphylococcus carnosus (strain TM300).